The chain runs to 452 residues: Metacaspase-1 (452 aa).

Positions 1–97 (MYPGAGRPTY…GPPLQGRPRD (97 aa)) are disordered. Positions 16-41 (QKGPYGQPQYQQQYAPPYPERYQQPY) are enriched in low complexity. Residues His238 and Cys294 contribute to the active site.

Belongs to the peptidase C14B family.

Its function is as follows. Involved in cell death (apoptosis). This Eremothecium gossypii (strain ATCC 10895 / CBS 109.51 / FGSC 9923 / NRRL Y-1056) (Yeast) protein is Metacaspase-1 (MCA1).